The sequence spans 84 residues: Putative membrane protein insertion efficiency factor (84 aa).

This sequence belongs to the UPF0161 family.

The protein localises to the cell inner membrane. In terms of biological role, could be involved in insertion of integral membrane proteins into the membrane. The sequence is that of Putative membrane protein insertion efficiency factor from Shewanella sp. (strain ANA-3).